We begin with the raw amino-acid sequence, 242 residues long: ATP-dependent dethiobiotin synthetase BioD 1 (242 aa).

12–17 (NVGKTT) contacts ATP. Thr16 provides a ligand contact to Mg(2+). Lys37 is a catalytic residue. An ATP-binding site is contributed by Asp66. Residues Asp66 and Glu124 each coordinate Mg(2+). Residues 184–185 (NR), 213–215 (PYL), and Glu220 contribute to the ATP site.

This sequence belongs to the dethiobiotin synthetase family. As to quaternary structure, homodimer. It depends on Mg(2+) as a cofactor.

The protein resides in the cytoplasm. The enzyme catalyses (7R,8S)-7,8-diammoniononanoate + CO2 + ATP = (4R,5S)-dethiobiotin + ADP + phosphate + 3 H(+). It participates in cofactor biosynthesis; biotin biosynthesis; biotin from 7,8-diaminononanoate: step 1/2. Catalyzes a mechanistically unusual reaction, the ATP-dependent insertion of CO2 between the N7 and N8 nitrogen atoms of 7,8-diaminopelargonic acid (DAPA, also called 7,8-diammoniononanoate) to form a ureido ring. This chain is ATP-dependent dethiobiotin synthetase BioD 1, found in Haemophilus influenzae (strain ATCC 51907 / DSM 11121 / KW20 / Rd).